Consider the following 178-residue polypeptide: CCHC-type zinc finger nucleic acid binding protein (178 aa).

S2 bears the N-acetylserine mark. The CCHC-type 1 zinc-finger motif lies at 4-21; the sequence is NECFKCGRSGHWARECPT. Residue K8 is modified to N6-acetyllysine. An omega-N-methylarginine; by PRMT1 mark is found at R25 and R27. Residues 25–38 are RNA-binding Arg/Gly-rich region (RGG-box); sequence RGRGMRSRGRGGFT. 2 positions are modified to omega-N-methylarginine: R32 and R34. Phosphoserine is present on S49. 6 consecutive CCHC-type zinc fingers follow at residues 52–69, 72–90, 97–114, 118–135, 136–153, and 157–174; these read DICY…DCDL, DEAC…DCKE, QCCY…DCDH, QKCY…DCTK, VKCY…NCSK, and VNCY…ECTI. 3 positions are modified to omega-N-methylarginine: D72, G79, and R80.

In terms of assembly, associates with the 40S ribosomal subunit, the 80S ribosome and with polysomes. Post-translationally, arginine methylation by PRMT1 in the Arg/Gly-rich region impedes RNA binding.

Its subcellular location is the nucleus. It is found in the cytoplasm. The protein resides in the endoplasmic reticulum. Its function is as follows. Single-stranded DNA-binding protein that preferentially binds to the sterol regulatory element (SRE) sequence 5'-GTGCGGTG-3', and thereby mediates transcriptional repression. Has a role as transactivator of the Myc promoter. Binds single-stranded RNA in a sequence-specific manner. Binds G-rich elements in target mRNA coding sequences. Prevents G-quadruplex structure formation in vitro, suggesting a role in supporting translation by resolving stable structures on mRNAs. This Mus musculus (Mouse) protein is CCHC-type zinc finger nucleic acid binding protein.